Reading from the N-terminus, the 196-residue chain is MPVLSDDAVLVVGLGNPGPNYAKTRHNLGFMVADLLAAKDGATFKPHKKSGAEATTIRLGGRAVNLAKPRTFMNTSGPQVAALAKFFSVPPANVIVMHDELDLDFGTVRLKLGGGEGGHNGLRSVSQSLGTKDYLRVRLGVGRPPGRKDPAAFVLENFAKAETDQVPLLCEQGADAAELLIRLGLEAAQNQVHAWG.

A tRNA-binding site is contributed by Tyr-21. Residue His-26 is the Proton acceptor of the active site. Positions 72, 74, and 120 each coordinate tRNA.

It belongs to the PTH family. Monomer.

Its subcellular location is the cytoplasm. The catalysed reaction is an N-acyl-L-alpha-aminoacyl-tRNA + H2O = an N-acyl-L-amino acid + a tRNA + H(+). Hydrolyzes ribosome-free peptidyl-tRNAs (with 1 or more amino acids incorporated), which drop off the ribosome during protein synthesis, or as a result of ribosome stalling. In terms of biological role, catalyzes the release of premature peptidyl moieties from peptidyl-tRNA molecules trapped in stalled 50S ribosomal subunits, and thus maintains levels of free tRNAs and 50S ribosomes. The protein is Peptidyl-tRNA hydrolase of Mycobacteroides abscessus (strain ATCC 19977 / DSM 44196 / CCUG 20993 / CIP 104536 / JCM 13569 / NCTC 13031 / TMC 1543 / L948) (Mycobacterium abscessus).